The primary structure comprises 479 residues: Ribosomal RNA small subunit methyltransferase F (479 aa).

Residues 125–131, Glu-149, Asp-176, and Asp-194 each bind S-adenosyl-L-methionine; that span reads AAAPGSK. The active-site Nucleophile is Cys-247.

It belongs to the class I-like SAM-binding methyltransferase superfamily. RsmB/NOP family.

The protein localises to the cytoplasm. It catalyses the reaction cytidine(1407) in 16S rRNA + S-adenosyl-L-methionine = 5-methylcytidine(1407) in 16S rRNA + S-adenosyl-L-homocysteine + H(+). In terms of biological role, specifically methylates the cytosine at position 1407 (m5C1407) of 16S rRNA. In Salmonella typhi, this protein is Ribosomal RNA small subunit methyltransferase F.